The following is a 447-amino-acid chain: MSLVDLGKRLLEAARKGQDDEVRTLMANGAPFTTDWLGTSPLHLAAQYGHYSTAEVLLRAGVSRDARTKVDRTPLHMAAADGHAHIVELLVRNGADVNAKDMLKMTALHWATEHHHRDVVELLIKYGADVHAFSKFDKSAFDIALEKNNAEILVILQEAMQNQVNANPERANPVTMATPFIFTSGEVVNLASLVSSASTKTTSGDPHASSTVHFSNSTTSVLATLAALAEASAPLSNSHRATANSEEIIEGNSVDSSIQQVVGSGGQRVITIVTDGIPLGNIQTAIPAGGIGQPFIVTVQDGQQVLTVPAGQVAEETVIEEEAEEAEKLPLTKKPRIEEMTNSVEESKEGTERELLQQRLQEANRRAQEYRHQLLKKEQEAEQYRLRLEAMARQQPNGVDFAMVEEVAEVDAVVVTEREMEERETEVTGAVGTAEPHTGVSMETVST.

ANK repeat units lie at residues 5-34 (DLGK…PFTT), 37-66 (LGTS…SRDA), 70-99 (VDRT…DVNA), 103-132 (LKMT…DVHA), and 136-166 (FDKS…QVNA). Phosphoserine is present on S253. A coiled-coil region spans residues 345-395 (EESKEGTERELLQQRLQEANRRAQEYRHQLLKKEQEAEQYRLRLEAMARQQ). Residues 418–447 (REMEERETEVTGAVGTAEPHTGVSMETVST) are disordered.

In terms of assembly, heterotetramer of two alpha and two beta subunits. The C-terminal is necessary for the formation of a heterotetrameric GABP-alpha-2/beta-2 complex, and also facilitates homotypic dimerization. Interacts with ADGRB2.

Its subcellular location is the nucleus. Its function is as follows. May function as transcription factor capable of interacting with purine rich repeats (GA repeats). In Bos taurus (Bovine), this protein is GA-binding protein subunit beta-2 (GABPB2).